Here is a 270-residue protein sequence, read N- to C-terminus: Small ribosomal subunit protein bS1m (270 aa).

Positions 218 to 250 are disordered; sequence TKQGFKHLGPKPLAYTEKKRETTKQSTKNNVFQ.

The protein belongs to the bacterial ribosomal protein bS1 family.

It localises to the mitochondrion. The polypeptide is Small ribosomal subunit protein bS1m (RPS1) (Marchantia polymorpha (Common liverwort)).